We begin with the raw amino-acid sequence, 327 residues long: 2-keto-3-deoxygluconate permease (327 aa).

Transmembrane regions (helical) follow at residues 10 to 30 (IPGG…TFSP), 42 to 62 (GMIT…GASI), 73 to 93 (KSGT…AIAS), 95 to 115 (IIPE…LALV), 139 to 159 (AGAF…IILG), 163 to 183 (IASF…VGFA), 199 to 219 (VQTL…LTVI), 224 to 244 (LLGI…LIIA), 254 to 274 (TAGI…VLIA), and 289 to 309 (SLVA…TSIW).

Belongs to the KdgT transporter family.

The protein resides in the cell inner membrane. It carries out the reaction 2-dehydro-3-deoxy-D-gluconate(in) + H(+)(in) = 2-dehydro-3-deoxy-D-gluconate(out) + H(+)(out). Catalyzes the proton-dependent uptake of 2-keto-3-deoxygluconate (KDG) into the cell. The sequence is that of 2-keto-3-deoxygluconate permease from Escherichia coli O7:K1 (strain IAI39 / ExPEC).